Reading from the N-terminus, the 93-residue chain is Protein LSO1 (93 aa).

A disordered region spans residues 1-73 (MHNTGKRYSE…TEKLRAKKER (73 aa)). The stretch at 20–83 (ARKRRQAYEK…DQLLAAEEEA (64 aa)) forms a coiled coil. Basic and acidic residues-rich tracts occupy residues 25–49 (QAYEKDQLEKQQLEAQEAQRWEEGA) and 57–73 (LIMEQKKTEKLRAKKER).

It localises to the nucleus. The protein localises to the cytoplasm. Functionally, likely to play a role in iron homeostasis. The sequence is that of Protein LSO1 from Saccharomyces cerevisiae (strain ATCC 204508 / S288c) (Baker's yeast).